A 491-amino-acid chain; its full sequence is MGANNGKQYGSEGKGSSSVSSDVSSSTDHTPTKAQRNVATSEDSDLSMRTLSTPSPALICPPTLPGFQNGRGSSTSSSSITGETVAMVHSPPPTRLTHPLIRLASRPQKEQASIDRLPDHSMVQIFSFLPTNQLCRCARVCRRWYNLAWDPRLWRTIRLTGETINVDRALKVLTRRLCQDTPNVCLMLETVIVSGCRRLTDRGLYTIAQCCPELRRLEVSGCYNISNEAVFDVVSLCPNLEHLDVSGCSKVTCISLTREASIKLSPLHGKQISIRYLDMTDCFVLEDEGLHTIAAHCTQLTHLYLRRCVRLTDEGLRYLVIYCTSIKELSVSDCRFVSDFGLREIAKLESRLRYLSIAHCGRITDVGIRYVAKYCSKLRYLNARGCEGITDHGVEYLAKNCTKLKSLDIGKCPLVSDTGLESLALNCFNLKRLSLKSCESITGQGLQIVAANCFDLQMLNVQDCEVSVEALRFVKRHCKRCVIEHTNPAFF.

Positions 1-79 (MGANNGKQYG…GRGSSTSSSS (79 aa)) are disordered. Residues 16–26 (SSSVSSDVSSS) are compositionally biased toward low complexity. Over residues 27-55 (TDHTPTKAQRNVATSEDSDLSMRTLSTPS) the composition is skewed to polar residues. The 47-residue stretch at 111–157 (QASIDRLPDHSMVQIFSFLPTNQLCRCARVCRRWYNLAWDPRLWRTI) folds into the F-box domain. LRR repeat units follow at residues 185-210 (CLML…IAQC), 211-236 (CPEL…VVSL), 237-262 (CPNL…EASI), 271-296 (QISI…IAAH), 297-322 (CTQL…LVIY), 323-348 (CTSI…IAKL), 349-374 (ESRL…VAKY), 375-400 (CSKL…LAKN), 401-426 (CTKL…LALN), and 427-452 (CFNL…VAAN).

The protein belongs to the FBXL7 family. In terms of assembly, part of the SCF (SKP1-CUL1-F-box) E3 ubiquitin-protein ligase complex SCF(FBXL7) composed of CUL1, SKP1, RBX1 and FBXL7. Interacts with AURKA; interaction takes place during mitosis but not in interphase. Interacts with BIRC5; this interaction allows BIRC5 to be polyubiquitinated by the SCF(FBXL7) E3 ubiquitin-protein ligase complex.

It localises to the cytoplasm. The protein resides in the cytoskeleton. Its subcellular location is the microtubule organizing center. The protein localises to the centrosome. It functions in the pathway protein modification; protein ubiquitination. Its function is as follows. Substrate recognition component of a SCF (SKP1-CUL1-F-box protein) E3 ubiquitin-protein ligase complex. During mitosis, it mediates the ubiquitination and subsequent proteasomal degradation of AURKA, causing mitotic arrest. It also regulates mitochondrial function by mediating the ubiquitination and proteasomal degradation of the apoptosis inhibitor BIRC5. This is F-box/LRR-repeat protein 7 (Fbxl7) from Mus musculus (Mouse).